The sequence spans 902 residues: MAAVGSMRSGSPAFGLGHLLTLAILALASDACKEVVLQVPSELPAEKFVGRVNLMDCLKSADIVHLSDPDFQVLEDGSVYTTSSVVLSSGQRSFTIWLFSTDSQEEREISVHLEGPVEVLNKRPHTEKVLSRAKRRWAPIPCSMLENSLGPFPLFLQQIQSDTAQNYTIYYSIRGPGVDKEPLNLFYVERDTGNLYCTGRVDREQYESFELTAFATTPDGYTPEYPLPLLIKIEDENDNYPIFTQKLYSFTVQENSRIGSIVGEVCATDLDEPDTMHTRLRYSILEQSPSPPMLFTMHPSTGVITTTSAQLDRELIDKYQLLIKVQDMDGQYFGLHTTAKCIITIEDVNDNLPTFTRTTYVTSVEENTVNVEILRLTVQDKDLVNSPNWRANYTILKGNENGNFKIVTDPKTNEGILCVIKPLDYEERQQVTLQIGVVNEAPYTREASSKSPMSTATVTVTVTNQDEGPECIPPMQTVRIQENVPVGTRNDGYKAYDPETRSSSGIRYRKLSDPRGWVTVNEDSGSITIFRALDREAETVRNGIYNITVLALDADGRSCTGTLGIILEDVNDNGPFIPKQTVVICKATMSSAEIVAVDLDDPVNGPPFDFSLESSDSEVQRMWRLTRINDTAARLSYQNDPSFGSYAVPIRVTDRLGLSSVTTLNVLVCDCITESDCTLRSGERTGYADVRLGPWAILAILLGIALLFCILFTLVCSVSRASKQQKILPDDLAQQNLIVSNTEAPGDDKVYSTNGLTTQTMGASGQTAFTTMGTGVKSGGQETIEMVKGGQQTLDSRRGAGYHHHTLDPCRGGHVEVDNYRHTYSEWYNFIQPRLGDKVQFCHTDDNQKLAQDYVLTYNYEGKGSAAGSVGCCSDLQEEDGLEFLDHLEPKFRTLAEVCAKR.

The N-terminal stretch at 1 to 27 (MAAVGSMRSGSPAFGLGHLLTLAILAL) is a signal peptide. Positions 28–135 (ASDACKEVVL…TEKVLSRAKR (108 aa)) are excised as a propeptide. 5 Cadherin domains span residues 136-243 (RWAP…YPIF), 244-355 (TQKL…LPTF), 356-471 (TRTT…GPEC), 472-579 (IPPM…FIPK), and 580-694 (QTVV…RLGP). Residues 136–694 (RWAPIPCSML…TGYADVRLGP (559 aa)) are Extracellular-facing. Asn-166 is a glycosylation site (N-linked (GlcNAc...) asparagine). N-linked (GlcNAc...) asparagine glycosylation is found at Asn-392, Asn-546, and Asn-629. Residues 695-715 (WAILAILLGIALLFCILFTLV) form a helical membrane-spanning segment. At 716–902 (CSVSRASKQQ…RTLAEVCAKR (187 aa)) the chain is on the cytoplasmic side. Phosphoserine occurs at positions 865, 869, and 874.

As to quaternary structure, interacts with DSP, PKP2 and JUP. Interacts with DSG3; the interaction may limit the interaction of DSC3 with p38MAPK family members and therefore repress p38MAPK signaling activation. Expressed in intestinal epithelial cells (at protein level). Expressed in the heart. Expressed in tongue, bladder, stomach, liver, kidney, and lung.

It is found in the cell membrane. The protein localises to the cell junction. The protein resides in the desmosome. Its function is as follows. A component of desmosome cell-cell junctions which are required for positive regulation of cellular adhesion. Promotes timely incorporation of DSG2 into desmosome intercellular junctions and promotes interaction of desmosome cell junctions with intermediate filament cytokeratin, via modulation of DSP phosphorylation. Plays an important role in desmosome-mediated maintenance of intestinal epithelial cell intercellular adhesion strength and barrier function. Positively regulates wound healing of intestinal mucosa via promotion of epithelial cell migration, and also plays a role in mechanotransduction of force between intestinal epithelial cells and extracellular matrix. May contribute to epidermal cell positioning (stratification) by mediating differential adhesiveness between cells that express different isoforms. May promote p38MAPK signaling activation that facilitates keratinocyte migration. This is Desmocollin-2 (Dsc2) from Mus musculus (Mouse).